Here is a 216-residue protein sequence, read N- to C-terminus: ATP-dependent Clp protease proteolytic subunit (216 aa).

S120 (nucleophile) is an active-site residue. H145 is an active-site residue.

The protein belongs to the peptidase S14 family. In terms of assembly, fourteen ClpP subunits assemble into 2 heptameric rings which stack back to back to give a disk-like structure with a central cavity, resembling the structure of eukaryotic proteasomes.

The protein localises to the cytoplasm. It catalyses the reaction Hydrolysis of proteins to small peptides in the presence of ATP and magnesium. alpha-casein is the usual test substrate. In the absence of ATP, only oligopeptides shorter than five residues are hydrolyzed (such as succinyl-Leu-Tyr-|-NHMec, and Leu-Tyr-Leu-|-Tyr-Trp, in which cleavage of the -Tyr-|-Leu- and -Tyr-|-Trp bonds also occurs).. Functionally, cleaves peptides in various proteins in a process that requires ATP hydrolysis. Has a chymotrypsin-like activity. Plays a major role in the degradation of misfolded proteins. This is ATP-dependent Clp protease proteolytic subunit from Cupriavidus necator (strain ATCC 17699 / DSM 428 / KCTC 22496 / NCIMB 10442 / H16 / Stanier 337) (Ralstonia eutropha).